Reading from the N-terminus, the 235-residue chain is Regulator of G-protein signaling 9-binding protein (235 aa).

Residues 1–210 (MAREECKALL…ERGGGCDPRK (210 aa)) are Cytoplasmic-facing. 2 coiled-coil regions span residues 29-54 (GSAD…AVST) and 144-169 (VADL…MKVN). Positions 153 to 200 (EVLQVGEMIDNMEMKVNVPRWTVQARQAAGAELLSTVSAGPSSVVSLQ) are SNARE-like. A helical; Anchor for type IV membrane protein transmembrane segment spans residues 211 to 231 (ALAAILFGAVLLAAVALAVCV). Residues 232 to 235 (AKLS) are Extracellular-facing.

It belongs to the RGS7BP/RGS9BP family. In terms of assembly, specifically interacts with isoform RGS9-1 of RGS9. Component of the RGS9-1-Gbeta5 complex composed of RGS9-1, Gbeta5 (GNB5) and RGS9BP.

Its subcellular location is the membrane. Regulator of G protein-coupled receptor (GPCR) signaling in phototransduction. Participates in the recovery phase of visual transduction via its interaction with RGS9-1 isoform. Acts as a membrane-anchor that mediates the targeting of RGS9-1 to the photoreceptor outer segment, where phototransduction takes place. Enhances the ability of RGS9-1 to stimulate G protein GTPase activity, allowing the visual signal to be terminated on the physiologically time scale. It also controls the proteolytic stability of RGS9-1, probably by protecting it from degradation. The polypeptide is Regulator of G-protein signaling 9-binding protein (RGS9BP) (Homo sapiens (Human)).